A 399-amino-acid chain; its full sequence is Probable aspartate/prephenate aminotransferase (399 aa).

L-aspartate-binding residues include G39, W125, and N175. The residue at position 239 (K239) is an N6-(pyridoxal phosphate)lysine. R375 is an L-aspartate binding site.

It belongs to the class-I pyridoxal-phosphate-dependent aminotransferase family. As to quaternary structure, homodimer. Pyridoxal 5'-phosphate is required as a cofactor.

Its subcellular location is the cytoplasm. The catalysed reaction is L-aspartate + 2-oxoglutarate = oxaloacetate + L-glutamate. The enzyme catalyses L-arogenate + 2-oxoglutarate = prephenate + L-glutamate. Functionally, catalyzes the reversible conversion of aspartate and 2-oxoglutarate to glutamate and oxaloacetate. Can also transaminate prephenate in the presence of glutamate. This chain is Probable aspartate/prephenate aminotransferase (aatA), found in Rickettsia typhi (strain ATCC VR-144 / Wilmington).